The primary structure comprises 90 residues: Barrier-to-autointegration factor A (90 aa).

The protein belongs to the BAF family. As to quaternary structure, homodimer. Interacts with nemp1a and nemp1b. In terms of processing, phosphorylated during S and M phases.

It is found in the nucleus. It localises to the chromosome. Its subcellular location is the nucleus envelope. The protein resides in the cytoplasm. In terms of biological role, non-specific DNA-binding protein that plays key roles in mitotic nuclear reassembly, chromatin organization, DNA damage response, gene expression and intrinsic immunity against foreign DNA. Contains two non-specific double-stranded DNA (dsDNA)-binding sites which promote DNA cross-bridging. Plays a key role in nuclear membrane reformation at the end of mitosis by driving formation of a single nucleus in a spindle-independent manner. Transiently cross-bridges anaphase chromosomes via its ability to bridge distant DNA sites, leading to the formation of a dense chromatin network at the chromosome ensemble surface that limits membranes to the surface. Also acts as a negative regulator of innate immune activation by restricting CGAS activity toward self-DNA upon acute loss of nuclear membrane integrity. Outcompetes CGAS for DNA-binding, thereby preventing CGAS activation and subsequent damaging autoinflammatory responses. Also involved in DNA damage response; acts by inhibiting the ADP-ribosyltransferase activity of PARP1. Involved in the recognition of exogenous dsDNA in the cytosol: associates with exogenous dsDNA immediately after its appearance in the cytosol at endosome breakdown and is required to avoid autophagy. This is Barrier-to-autointegration factor A (banf1-a) from Xenopus laevis (African clawed frog).